We begin with the raw amino-acid sequence, 573 residues long: PCNA-interacting partner (573 aa).

Positions 463 to 511 (VSEGAQPSVGKARLETSSENVHVDRSKDDKGPRKSTKRKLAKSKQPGVR) are disordered. Basic and acidic residues predominate over residues 474 to 494 (ARLETSSENVHVDRSKDDKGP). A compositionally biased stretch (basic residues) spans 495 to 504 (RKSTKRKLAK).

This sequence belongs to the PARI family. As to quaternary structure, interacts with RAD51 and PCNA. Interacts with PARP1. Interacts with TASOR. Present in testis (at protein level). Expressed in testis, gastrointestinal tract (jejunum, ileum, and colon) and immune system (thymus and spleen). Weakly expressed in lung, kidney, pituitary gland and muscle.

The protein localises to the cytoplasm. Its subcellular location is the nucleus. Functionally, required to suppress inappropriate homologous recombination, thereby playing a central role DNA repair and in the maintenance of genomic stability. Antagonizes homologous recombination by interfering with the formation of the RAD51-DNA homologous recombination structure. Positively regulate the poly(ADP-ribosyl)ation activity of PARP1; however such function may be indirect. Binds single-strand DNA and poly(A) homopolymers. This Rattus norvegicus (Rat) protein is PCNA-interacting partner (Parpbp).